Consider the following 566-residue polypeptide: Type IV pilus assembly ATPase PilB (566 aa).

326–333 contributes to the ATP binding site; that stretch reads GPTGSGKT. C459, C462, C494, and C497 together coordinate Zn(2+).

It belongs to the GSP E family. In terms of assembly, homohexamer. Interacts with PilC. Interacts with FimX; this interaction positively regulates T4P assembly and twitching motility by promoting the activity of the PilB ATPase.

It is found in the cytoplasm. Its function is as follows. ATPase component of the type IV pilus (T4P) that plays a role in surface and host cell adhesion, colonization, biofilm maturation, virulence, and twitching, a form of surface-associated motility facilitated by cycles of extension, adhesion, and retraction of T4P fibers. Acts as a molecular motor to provide the energy that is required for biogenesis of the pilus and the extrusion of substrates generated in the cytoplasm. PilB ATPase activity is also essential for T4P extension while antagonist PilT ATPase activity is required for T4P retraction. This chain is Type IV pilus assembly ATPase PilB (pilB), found in Pseudomonas aeruginosa (strain ATCC 15692 / DSM 22644 / CIP 104116 / JCM 14847 / LMG 12228 / 1C / PRS 101 / PAO1).